The chain runs to 570 residues: Periplasmic trehalase (570 aa).

Residues 1–34 form the signal peptide; that stretch reads MIPPEIRRSVLLQKAIKLALAGTLLTFASFSATA. Substrate contacts are provided by residues Arg159, 166–167, Asn203, 212–214, 284–286, and Gly317; these read WD, RSQ, and RPE. Active-site proton donor/acceptor residues include Asp319 and Glu503. Glu518 contacts substrate. The tract at residues 544–570 is disordered; that stretch reads KPCDSVPSTRPASLSATPTKTPSAATQ. The span at 554-570 shows a compositional bias: low complexity; it reads PASLSATPTKTPSAATQ.

It belongs to the glycosyl hydrolase 37 family. As to quaternary structure, monomer.

The protein resides in the periplasm. It catalyses the reaction alpha,alpha-trehalose + H2O = alpha-D-glucose + beta-D-glucose. Its function is as follows. Provides the cells with the ability to utilize trehalose at high osmolarity by splitting it into glucose molecules that can subsequently be taken up by the phosphotransferase-mediated uptake system. The polypeptide is Periplasmic trehalase (Salmonella schwarzengrund (strain CVM19633)).